Reading from the N-terminus, the 408-residue chain is Peptidase T (408 aa).

Residue H78 coordinates Zn(2+). D80 is a catalytic residue. D140 is a binding site for Zn(2+). The Proton acceptor role is filled by E173. Residues E174, D196, and H379 each coordinate Zn(2+).

It belongs to the peptidase M20B family. It depends on Zn(2+) as a cofactor.

The protein localises to the cytoplasm. The catalysed reaction is Release of the N-terminal residue from a tripeptide.. Cleaves the N-terminal amino acid of tripeptides. The sequence is that of Peptidase T from Shigella boydii serotype 18 (strain CDC 3083-94 / BS512).